The primary structure comprises 370 residues: Anhydro-N-acetylmuramic acid kinase (370 aa).

Residue 12–19 (GTSLDGVD) coordinates ATP.

The protein belongs to the anhydro-N-acetylmuramic acid kinase family.

It catalyses the reaction 1,6-anhydro-N-acetyl-beta-muramate + ATP + H2O = N-acetyl-D-muramate 6-phosphate + ADP + H(+). The protein operates within amino-sugar metabolism; 1,6-anhydro-N-acetylmuramate degradation. Its pathway is cell wall biogenesis; peptidoglycan recycling. Functionally, catalyzes the specific phosphorylation of 1,6-anhydro-N-acetylmuramic acid (anhMurNAc) with the simultaneous cleavage of the 1,6-anhydro ring, generating MurNAc-6-P. Is required for the utilization of anhMurNAc either imported from the medium or derived from its own cell wall murein, and thus plays a role in cell wall recycling. The polypeptide is Anhydro-N-acetylmuramic acid kinase (Yersinia pseudotuberculosis serotype O:1b (strain IP 31758)).